The following is a 191-amino-acid chain: Thymidine kinase (191 aa).

Residues 15-22 (GPMYSGKT) and 88-91 (DEAQ) each bind ATP. Glutamate 89 serves as the catalytic Proton acceptor. The Zn(2+) site is built by cysteine 145, cysteine 148, cysteine 183, and cysteine 186.

The protein belongs to the thymidine kinase family. As to quaternary structure, homotetramer.

It localises to the cytoplasm. The catalysed reaction is thymidine + ATP = dTMP + ADP + H(+). In Clostridium botulinum (strain Loch Maree / Type A3), this protein is Thymidine kinase.